We begin with the raw amino-acid sequence, 155 residues long: MAARAACVAVCRRLQQITTSDEPDTLYKRLSILVKAHDKAVLDSYEYFAVLAAKELGLSIKVHEPPRKIERFTLLKSVHIFKKHRVQYEMRTLYRCLELKHLTGCTANVYLEYIQRNLPEGVAMEVTKTQIQQLPEHIKEPMWETVSGEKEETKS.

Belongs to the universal ribosomal protein uS10 family. Component of the mitochondrial ribosome small subunit (28S) which comprises a 12S rRNA and about 30 distinct proteins.

The protein resides in the mitochondrion. This Rattus norvegicus (Rat) protein is Small ribosomal subunit protein uS10m (Mrps10).